A 199-amino-acid polypeptide reads, in one-letter code: Histone deacetylase complex subunit SAP25 (199 aa).

Polar residues-rich tracts occupy residues 151-163 and 184-199; these read QMSQ…SSSA and QGAD…THCP. The disordered stretch occupies residues 151-199; the sequence is QMSQGEPRPSSSAVGPPDHTSDPPSPCGSPSSSQGADLSLPQTPDTHCP.

As to quaternary structure, may be a component of the mSIN3A corepressor complex. Interacts with SIN3A. Interacts with HDAC2.

It localises to the nucleus. The protein localises to the cytoplasm. Functionally, involved in the transcriptional repression mediated by the mSIN3A but not the N-CoR corepressor complex. This Homo sapiens (Human) protein is Histone deacetylase complex subunit SAP25 (SAP25).